The chain runs to 262 residues: Ribosome-recycling factor, mitochondrial (262 aa).

Residues 1-55 (MASGIRCFRLLHPAFRSYHAALTRPVSEVSMKTVSGRQHGHRQYSAYPAVPVRHF) constitute a mitochondrion transit peptide.

The protein belongs to the RRF family.

It is found in the mitochondrion. Responsible for the disassembly of ribosomes from messenger RNA at the termination of mitochondrial protein biosynthesis. Acts in collaboration with GFM2. Promotes mitochondrial ribosome recycling by dissolution of intersubunit contacts. This is Ribosome-recycling factor, mitochondrial (Mrrf) from Mus musculus (Mouse).